A 450-amino-acid polypeptide reads, in one-letter code: Phosphoglucosamine mutase (450 aa).

Ser-101 serves as the catalytic Phosphoserine intermediate. Ser-101, Asp-242, Asp-244, and Asp-246 together coordinate Mg(2+). The residue at position 101 (Ser-101) is a Phosphoserine.

Belongs to the phosphohexose mutase family. It depends on Mg(2+) as a cofactor. Activated by phosphorylation.

It carries out the reaction alpha-D-glucosamine 1-phosphate = D-glucosamine 6-phosphate. Its function is as follows. Catalyzes the conversion of glucosamine-6-phosphate to glucosamine-1-phosphate. This is Phosphoglucosamine mutase from Rhodopseudomonas palustris (strain ATCC BAA-98 / CGA009).